Consider the following 234-residue polypeptide: tRNA (guanine-N(1)-)-methyltransferase (234 aa).

S-adenosyl-L-methionine is bound by residues Gly-110 and 134-139 (IGDYVL).

This sequence belongs to the RNA methyltransferase TrmD family. As to quaternary structure, homodimer.

It localises to the cytoplasm. The enzyme catalyses guanosine(37) in tRNA + S-adenosyl-L-methionine = N(1)-methylguanosine(37) in tRNA + S-adenosyl-L-homocysteine + H(+). Its function is as follows. Specifically methylates guanosine-37 in various tRNAs. This Tropheryma whipplei (strain TW08/27) (Whipple's bacillus) protein is tRNA (guanine-N(1)-)-methyltransferase.